The sequence spans 94 residues: Integration host factor subunit beta (94 aa).

It belongs to the bacterial histone-like protein family. Heterodimer of an alpha and a beta chain.

In terms of biological role, this protein is one of the two subunits of integration host factor, a specific DNA-binding protein that functions in genetic recombination as well as in transcriptional and translational control. This Azorhizobium caulinodans (strain ATCC 43989 / DSM 5975 / JCM 20966 / LMG 6465 / NBRC 14845 / NCIMB 13405 / ORS 571) protein is Integration host factor subunit beta.